We begin with the raw amino-acid sequence, 248 residues long: Probable transcriptional regulatory protein Mpop_0922 (248 aa).

It belongs to the TACO1 family.

The protein resides in the cytoplasm. The protein is Probable transcriptional regulatory protein Mpop_0922 of Methylorubrum populi (strain ATCC BAA-705 / NCIMB 13946 / BJ001) (Methylobacterium populi).